A 104-amino-acid polypeptide reads, in one-letter code: Transcription factor S (104 aa).

Positions 4, 7, 20, 22, 65, 68, 93, and 96 each coordinate Zn(2+). Residues 4–22 (CPKCGAVMFPSEGKFKCQC) form a C4-type zinc finger. The TFIIS-type zinc finger occupies 61–101 (TRVECPKCGNMEAFWWLQQTRRADESETRFFRCTRCKHTWR).

This sequence belongs to the archaeal RpoM/eukaryotic RPA12/RPB9/RPC11 RNA polymerase family.

In terms of biological role, induces RNA cleavage activity in the RNA polymerase. In its presence, the cleavage activity of the RNA polymerase truncates the RNA back to position +15 in a stepwise manner by releasing mainly dinucleotides from the 3'-end of the nascent RNA. The truncated RNAs are able to continue elongation. Involved in transcriptional proofreading and fidelity. Misincorporation of nucleotides during elongation of transcription leads to arrested elongation complexes which are rescued by TFS-promoted removal of a dinucleotide from the 3'-end. TFS is able to induce a cleavage resynthesis cycle in stalled elongation complexes (resulting from the next missing nucleotide or a reduced incorporation rate of a wrong nucleotide) preventing misincorporation and enabling proofreading in a post-incorporation manner. Pausing of elongation complexes is the main determinant of TFS-induced RNA cleavage. The sequence is that of Transcription factor S from Methanothermobacter thermautotrophicus (strain ATCC 29096 / DSM 1053 / JCM 10044 / NBRC 100330 / Delta H) (Methanobacterium thermoautotrophicum).